The sequence spans 370 residues: Aminomethyltransferase (370 aa).

Belongs to the GcvT family. In terms of assembly, the glycine cleavage system is composed of four proteins: P, T, L and H.

It catalyses the reaction N(6)-[(R)-S(8)-aminomethyldihydrolipoyl]-L-lysyl-[protein] + (6S)-5,6,7,8-tetrahydrofolate = N(6)-[(R)-dihydrolipoyl]-L-lysyl-[protein] + (6R)-5,10-methylene-5,6,7,8-tetrahydrofolate + NH4(+). Its function is as follows. The glycine cleavage system catalyzes the degradation of glycine. This chain is Aminomethyltransferase, found in Prochlorococcus marinus (strain AS9601).